The sequence spans 182 residues: Ribosome-recycling factor (182 aa).

Belongs to the RRF family.

The protein resides in the cytoplasm. Its function is as follows. Responsible for the release of ribosomes from messenger RNA at the termination of protein biosynthesis. May increase the efficiency of translation by recycling ribosomes from one round of translation to another. The chain is Ribosome-recycling factor from Nostoc sp. (strain PCC 7120 / SAG 25.82 / UTEX 2576).